The sequence spans 597 residues: Elongation factor 4 (597 aa).

One can recognise a tr-type G domain in the interval 2-184; sequence KNIRNFSIIA…RLVRDIPAPE (183 aa). GTP-binding positions include 14-19 and 131-134; these read DHGKST and NKID.

The protein belongs to the TRAFAC class translation factor GTPase superfamily. Classic translation factor GTPase family. LepA subfamily.

It localises to the cell inner membrane. The enzyme catalyses GTP + H2O = GDP + phosphate + H(+). In terms of biological role, required for accurate and efficient protein synthesis under certain stress conditions. May act as a fidelity factor of the translation reaction, by catalyzing a one-codon backward translocation of tRNAs on improperly translocated ribosomes. Back-translocation proceeds from a post-translocation (POST) complex to a pre-translocation (PRE) complex, thus giving elongation factor G a second chance to translocate the tRNAs correctly. Binds to ribosomes in a GTP-dependent manner. In Edwardsiella ictaluri (strain 93-146), this protein is Elongation factor 4.